Reading from the N-terminus, the 159-residue chain is Putative ribosomal RNA large subunit methyltransferase H (159 aa).

Residues L76, G108, and 127 to 132 contribute to the S-adenosyl-L-methionine site; that span reads LSPLTF.

It belongs to the RNA methyltransferase RlmH family.

The protein localises to the cytoplasm. It carries out the reaction pseudouridine(1915) in 23S rRNA + S-adenosyl-L-methionine = N(3)-methylpseudouridine(1915) in 23S rRNA + S-adenosyl-L-homocysteine + H(+). Its function is as follows. Specifically methylates the pseudouridine at position 1915 (m3Psi1915) in 23S rRNA. The sequence is that of Putative ribosomal RNA large subunit methyltransferase H from Methanoregula boonei (strain DSM 21154 / JCM 14090 / 6A8).